We begin with the raw amino-acid sequence, 602 residues long: Potassium-transporting ATPase potassium-binding subunit (602 aa).

The next 4 helical transmembrane spans lie at A5 to A25, G65 to Q85, G136 to I156, and L179 to I199. Residues Q221–P248 form a disordered region. Residues K231–T241 show a composition bias toward basic and acidic residues. Transmembrane regions (helical) follow at residues L283 to F303, Q312 to T332, G419 to G439, A458 to L478, I523 to I543, and L566 to A586.

Belongs to the KdpA family. As to quaternary structure, the system is composed of three essential subunits: KdpA, KdpB and KdpC.

It is found in the cell inner membrane. In terms of biological role, part of the high-affinity ATP-driven potassium transport (or Kdp) system, which catalyzes the hydrolysis of ATP coupled with the electrogenic transport of potassium into the cytoplasm. This subunit binds the periplasmic potassium ions and delivers the ions to the membrane domain of KdpB through an intramembrane tunnel. In Chromobacterium violaceum (strain ATCC 12472 / DSM 30191 / JCM 1249 / CCUG 213 / NBRC 12614 / NCIMB 9131 / NCTC 9757 / MK), this protein is Potassium-transporting ATPase potassium-binding subunit.